A 133-amino-acid polypeptide reads, in one-letter code: MEPISHLVKSSLPNYLSSLPIPDSVGGWFKLSFKDWLALIPPTVVVAGIGYTAYLAYCPAAKAICSAKTSGRCNNLIRKNEPKVVDMIDVEDIAEKAAFCRCWKTKNWPYCDGSHGEHNKQTGDNVGPIVIKK.

Topologically, residues 1–35 are lumenal; it reads MEPISHLVKSSLPNYLSSLPIPDSVGGWFKLSFKD. A helical transmembrane segment spans residues 36-58; sequence WLALIPPTVVVAGIGYTAYLAYC. Topologically, residues 59–133 are cytoplasmic; the sequence is PAAKAICSAK…DNVGPIVIKK (75 aa). [2Fe-2S] cluster-binding residues include Cys-100, Cys-102, Cys-111, and His-115.

This sequence belongs to the CISD protein family. CISD2 subfamily. [2Fe-2S] cluster is required as a cofactor.

Its subcellular location is the endoplasmic reticulum membrane. This chain is CDGSH iron-sulfur domain-containing protein 2 homolog, found in Drosophila yakuba (Fruit fly).